Reading from the N-terminus, the 130-residue chain is MWNEFKAFAMRGNIVDLAIGVVIGGAFGKIVTSLVNDIIMPLVGLLLGGLDFSGLSFTFGDAVVKYGSFIQTIVNFLIISFSIFIVIRTLNGLRRKKEAEEEAAEEAVDAQEELLKEIRDLLKQQAKSPE.

Residues 1–14 are Cytoplasmic-facing; sequence MWNEFKAFAMRGNI. Residues 15–43 form a helical membrane-spanning segment; it reads VDLAIGVVIGGAFGKIVTSLVNDIIMPLV. Topologically, residues 44-65 are extracellular; that stretch reads GLLLGGLDFSGLSFTFGDAVVK. Residues 66–85 form a helical membrane-spanning segment; that stretch reads YGSFIQTIVNFLIISFSIFI. Residues 86 to 130 lie on the Cytoplasmic side of the membrane; it reads VIRTLNGLRRKKEAEEEAAEEAVDAQEELLKEIRDLLKQQAKSPE.

The protein belongs to the MscL family. As to quaternary structure, homopentamer.

Its subcellular location is the cell membrane. Channel that opens in response to stretch forces in the membrane lipid bilayer. Forms a nonselective ion channel with a conductance of about 4 nanosiemens. May participate in the regulation of osmotic pressure changes within the cell. The polypeptide is Large-conductance mechanosensitive channel (Bacillus subtilis (strain 168)).